An 807-amino-acid chain; its full sequence is Glycerol-3-phosphate acyltransferase (807 aa).

The HXXXXD motif motif lies at 305-310 (CHRSHM).

It belongs to the GPAT/DAPAT family.

The protein localises to the cell inner membrane. It catalyses the reaction sn-glycerol 3-phosphate + an acyl-CoA = a 1-acyl-sn-glycero-3-phosphate + CoA. Its pathway is phospholipid metabolism; CDP-diacylglycerol biosynthesis; CDP-diacylglycerol from sn-glycerol 3-phosphate: step 1/3. This is Glycerol-3-phosphate acyltransferase from Aliivibrio fischeri (strain MJ11) (Vibrio fischeri).